We begin with the raw amino-acid sequence, 689 residues long: MTSTLATRLSTYSISLILQRIKIIKRCYSAPVLRDYQQDAIDACVNSIRQGTKRIGVSLATGGGKTVIFSNLINQLRQNYFKERQGNFKSLILVHRRELALQATATLKKIFPDLKVHIEMGKYDCDIEDSDVIVASVQTLIRRLHKYDTNSVNLIIIDEAHHSVANSYRSILDHFKASTAETKIPVIGFSATFERADKRALSMVMDKIVYHRGILEMIDDKWLCEAKFTSVKIEADLSDVKSTADDFQLAPLSSLMNTKEINEVILKTYLHKKQEKSLKSTLLFGVDKAHVQSLHKLFKDNGINTDYVTSDTKQIERDNIIQKFKNGETEVLMNCGIFTEGTDMPNIDCILLCRPTKSRSLLIQMIGRGLRLHHSKDHCHIIDFIGASSVGVVSAPTLLGIRSDDIEFDDATVEDLKAIQGEIIAKQQKIDERLRALFQTDEAAMENVTERNSVADWIHSANSVDLTLCSFDSFRNFTQSNNSYPSGKEFDEASEAVKEMELLMNSQYPWVKFASNAWGLPLKGKNHLRIYKEKSEDKLSMVYHLKMYRQLPCFITNKYADYVPKSIIKDANLWNVMSKVEKIINTLNSDLEGQTMQYQAISSKYSKWRQTVPTSKQRDFVFRKLKKVYGESSKDFIRLSLDDVTTYVNTKMTKGDASNLIFASSLAPVYPLKSLLRILEYQKRRSFIK.

In terms of domain architecture, Helicase ATP-binding spans 46 to 211 (NSIRQGTKRI…SMVMDKIVYH (166 aa)). 59–66 (LATGGGKT) provides a ligand contact to ATP. Positions 158-161 (DEAH) match the DEAH box motif. Residues 265–438 (ILKTYLHKKQ…KIDERLRALF (174 aa)) form the Helicase C-terminal domain.

Belongs to the helicase family. IRC3 subfamily.

Its subcellular location is the mitochondrion. The chain is Putative ATP-dependent helicase IRC3 (IRC3) from Saccharomyces cerevisiae (strain ATCC 204508 / S288c) (Baker's yeast).